Reading from the N-terminus, the 44-residue chain is MGNPKKNSKDFAPNHIGTQSKKAGGNKGKQMQDQTGKQPIVDNG.

The interval 1 to 44 (MGNPKKNSKDFAPNHIGTQSKKAGGNKGKQMQDQTGKQPIVDNG) is disordered.

Belongs to the SspN family.

The protein localises to the spore core. This chain is Small, acid-soluble spore protein N, found in Bacillus anthracis (strain A0248).